Reading from the N-terminus, the 91-residue chain is Small ribosomal subunit protein bS18 (91 aa).

The tract at residues 1-21 (MSDERAPQRSTGPRKKRPFQR) is disordered. Residues 12 to 21 (GPRKKRPFQR) show a composition bias toward basic residues.

This sequence belongs to the bacterial ribosomal protein bS18 family. As to quaternary structure, part of the 30S ribosomal subunit. Forms a tight heterodimer with protein bS6.

In terms of biological role, binds as a heterodimer with protein bS6 to the central domain of the 16S rRNA, where it helps stabilize the platform of the 30S subunit. In Geotalea daltonii (strain DSM 22248 / JCM 15807 / FRC-32) (Geobacter daltonii), this protein is Small ribosomal subunit protein bS18.